A 459-amino-acid polypeptide reads, in one-letter code: tRNA uridine(34) acetyltransferase (459 aa).

The segment at methionine 1–valine 278 is radical S-adenosyl-L-methionine (rSAM). Residues arginine 6–proline 271 enclose the Radical SAM core domain. Cysteine 23, cysteine 27, and cysteine 30 together coordinate [4Fe-4S] cluster. Position 77 (lysine 77) interacts with acetyl-CoA. An N-acetyltransferase region spans residues glutamine 308–aspartate 459. Residues cysteine 310, cysteine 312, and cysteine 315 each contribute to the Zn(2+) site. Acetyl-CoA-binding positions include glutamate 386 to valine 389, leucine 409 to arginine 411, and tyrosine 442.

It belongs to the ELP3 family. As to quaternary structure, homodimer. The cofactor is [4Fe-4S] cluster.

It catalyses the reaction uridine(34) in tRNA + acetyl-CoA + S-adenosyl-L-methionine + H2O = 5-(carboxymethyl)uridine(34) in tRNA + 5'-deoxyadenosine + L-methionine + CoA + 2 H(+). It functions in the pathway tRNA modification. In terms of biological role, tRNA uridine(34) acetyltransferase, which mediates formation of carboxymethyluridine in the wobble base at position 34 in tRNAs. The proposed mechanism is the following: (i) recruits S-adenosyl-L-methionine and cleaves it to generate a 5'-deoxyadenosine radical (5'-dA) in the radical S-adenosyl-L-methionine (rSAM) region, (ii) hydrolyzes acetyl-CoA in the N-acetyltransferase domain and (iii) an acetyl radical is formed by the products of the two domains and (iv) is transferred onto the C5 position of uridine(34) in the bound tRNA molecule. Does not show protein lysine acetyltransferase activity. This chain is tRNA uridine(34) acetyltransferase, found in Dehalococcoides mccartyi (strain CBDB1).